We begin with the raw amino-acid sequence, 25 residues long: Caerin 1.1 (25 aa).

Residue Leu-25 is modified to Leucine amide.

In terms of tissue distribution, expressed by the skin dorsal glands.

It is found in the secreted. In terms of biological role, antibacterial peptide with wide spectrum of activity. Active against the Gram-positive bacteria B.cereus (MIC=50 ug/ml), E.faecalis (MIC=25 ug/ml), L.lactis (MIC=1.5 ug/ml), L.innocua (MIC=25 ug/ml), S.aureus (MIC=3 ug/ml), S.epidermidis (MIC=12 ug/ml) and S.uberis (MIC=12 ug/ml), and against the Gram-negative bacteria E.coli (MIC=100 ug/ml) and P.multocida (MIC=25 ug/ml). The polypeptide is Caerin 1.1 (Litoria peronii (Emerald spotted tree frog)).